Consider the following 96-residue polypeptide: Putative pterin-4-alpha-carbinolamine dehydratase (96 aa).

The protein belongs to the pterin-4-alpha-carbinolamine dehydratase family.

The catalysed reaction is (4aS,6R)-4a-hydroxy-L-erythro-5,6,7,8-tetrahydrobiopterin = (6R)-L-erythro-6,7-dihydrobiopterin + H2O. This is Putative pterin-4-alpha-carbinolamine dehydratase from Prochlorococcus marinus (strain MIT 9215).